A 186-amino-acid chain; its full sequence is Peptide deformylase (186 aa).

Fe cation is bound by residues C99 and H141. Residue E142 is part of the active site. Residue H145 coordinates Fe cation.

The protein belongs to the polypeptide deformylase family. Fe(2+) is required as a cofactor.

It catalyses the reaction N-terminal N-formyl-L-methionyl-[peptide] + H2O = N-terminal L-methionyl-[peptide] + formate. Functionally, removes the formyl group from the N-terminal Met of newly synthesized proteins. Requires at least a dipeptide for an efficient rate of reaction. N-terminal L-methionine is a prerequisite for activity but the enzyme has broad specificity at other positions. This chain is Peptide deformylase, found in Chlamydia caviae (strain ATCC VR-813 / DSM 19441 / 03DC25 / GPIC) (Chlamydophila caviae).